The sequence spans 570 residues: Glutamate--tRNA ligase (570 aa).

Residues 107 to 117 carry the 'HIGH' region motif; sequence PNPDFVLHLGS.

It belongs to the class-I aminoacyl-tRNA synthetase family. Glutamate--tRNA ligase type 2 subfamily.

It localises to the cytoplasm. It catalyses the reaction tRNA(Glu) + L-glutamate + ATP = L-glutamyl-tRNA(Glu) + AMP + diphosphate. In terms of biological role, catalyzes the attachment of glutamate to tRNA(Glu) in a two-step reaction: glutamate is first activated by ATP to form Glu-AMP and then transferred to the acceptor end of tRNA(Glu). This Pyrobaculum calidifontis (strain DSM 21063 / JCM 11548 / VA1) protein is Glutamate--tRNA ligase.